Here is a 199-residue protein sequence, read N- to C-terminus: Dephospho-CoA kinase (199 aa).

Positions 3 to 199 (VIGLTGSIGM…AAAKMPRRRS (197 aa)) constitute a DPCK domain. 11 to 16 (GMGKST) serves as a coordination point for ATP.

The protein belongs to the CoaE family.

It localises to the cytoplasm. The catalysed reaction is 3'-dephospho-CoA + ATP = ADP + CoA + H(+). Its pathway is cofactor biosynthesis; coenzyme A biosynthesis; CoA from (R)-pantothenate: step 5/5. In terms of biological role, catalyzes the phosphorylation of the 3'-hydroxyl group of dephosphocoenzyme A to form coenzyme A. This chain is Dephospho-CoA kinase, found in Nitrobacter winogradskyi (strain ATCC 25391 / DSM 10237 / CIP 104748 / NCIMB 11846 / Nb-255).